A 715-amino-acid chain; its full sequence is Fatty acid oxidation complex subunit alpha (715 aa).

The tract at residues 1–189 (MIYQGETLTV…KVGAIDAVVA (189 aa)) is enoyl-CoA hydratase/isomerase. Asp-296 lines the substrate pocket. The segment at 311–715 (AKATSHAAVL…EMAAQGKTFY (405 aa)) is 3-hydroxyacyl-CoA dehydrogenase. NAD(+) contacts are provided by residues Met-325, Asp-344, 401-403 (VVE), Lys-408, and Ser-430. Residue His-451 is the For 3-hydroxyacyl-CoA dehydrogenase activity of the active site. Residue Asn-454 participates in NAD(+) binding. Substrate contacts are provided by Asn-501 and Tyr-661.

The protein in the N-terminal section; belongs to the enoyl-CoA hydratase/isomerase family. In the C-terminal section; belongs to the 3-hydroxyacyl-CoA dehydrogenase family. As to quaternary structure, heterotetramer of two alpha chains (FadB) and two beta chains (FadA).

The enzyme catalyses a (3S)-3-hydroxyacyl-CoA + NAD(+) = a 3-oxoacyl-CoA + NADH + H(+). The catalysed reaction is a (3S)-3-hydroxyacyl-CoA = a (2E)-enoyl-CoA + H2O. It catalyses the reaction a 4-saturated-(3S)-3-hydroxyacyl-CoA = a (3E)-enoyl-CoA + H2O. It carries out the reaction (3S)-3-hydroxybutanoyl-CoA = (3R)-3-hydroxybutanoyl-CoA. The enzyme catalyses a (3Z)-enoyl-CoA = a 4-saturated (2E)-enoyl-CoA. The catalysed reaction is a (3E)-enoyl-CoA = a 4-saturated (2E)-enoyl-CoA. Its pathway is lipid metabolism; fatty acid beta-oxidation. In terms of biological role, involved in the aerobic and anaerobic degradation of long-chain fatty acids via beta-oxidation cycle. Catalyzes the formation of 3-oxoacyl-CoA from enoyl-CoA via L-3-hydroxyacyl-CoA. It can also use D-3-hydroxyacyl-CoA and cis-3-enoyl-CoA as substrate. The sequence is that of Fatty acid oxidation complex subunit alpha from Aeromonas hydrophila subsp. hydrophila (strain ATCC 7966 / DSM 30187 / BCRC 13018 / CCUG 14551 / JCM 1027 / KCTC 2358 / NCIMB 9240 / NCTC 8049).